A 449-amino-acid polypeptide reads, in one-letter code: MVKRNLKGRGDKLSANAPLDNQLEAGKVAKQRDELREKQKRKREDSQTDEFVPDSLSSKILNEARKQLLEEALERQETESATSSVPKRQRGAWLGADASGDKSDDDDDDNEEEDDNGFEDQVVELDPRDEADLARFLKKDAIQMSTLYDIIQAKIEAKQNDAELALSQVDPNEFNMRDMDPEVVEMYEQIGQYMSKYRSGKVPKAFKIIPKMINWEQILFLTKPETWTAAAMYQATRLFASNMNPKMCQRFYTLVLLPRLRDDIDEFKKLNYHLYQALCKAIYKPAAFFKGLILPLLESGTCTLREAVIFSSVLTKVPIPIFHSAAAMLRIAEMEYTGANSVFLRALIDKKYALPYRAVDGVVNHFIRLKTDERDMPVLWHQCLLALCQRYKNDLNAEQKAAIYELIRFHGHYLISPEIRRELESKETEDGHVITSVVVEGRKTDSMEF.

Disordered stretches follow at residues 1-58 (MVKR…SLSS) and 71-125 (EALE…VVEL). The segment covering 30–46 (KQRDELREKQKRKREDS) has biased composition (basic and acidic residues). Positions 103–124 (SDDDDDDNEEEDDNGFEDQVVE) are enriched in acidic residues.

This sequence belongs to the bystin family.

This is an uncharacterized protein from Caenorhabditis elegans.